Reading from the N-terminus, the 163-residue chain is E3 ubiquitin-protein ligase ATL23 (163 aa).

Residues 35 to 55 (ALLLPCVGMCIVFLIYLFLLW) traverse the membrane as a helical segment. The segment at 104 to 146 (CAVCLEDIESGQSTRLVPGCNHGFHQLCADTWLSNHTVCPVCR) adopts an RING-type; atypical zinc-finger fold.

It belongs to the RING-type zinc finger family. ATL subfamily.

Its subcellular location is the membrane. It catalyses the reaction S-ubiquitinyl-[E2 ubiquitin-conjugating enzyme]-L-cysteine + [acceptor protein]-L-lysine = [E2 ubiquitin-conjugating enzyme]-L-cysteine + N(6)-ubiquitinyl-[acceptor protein]-L-lysine.. The protein operates within protein modification; protein ubiquitination. Its function is as follows. E3 ubiquitin-protein ligase able to catalyze polyubiquitination with ubiquitin-conjugating enzyme E2 UBC8, UBC10, UBC11, UBC28 and UBC29 in vitro. The protein is E3 ubiquitin-protein ligase ATL23 (ATL23) of Arabidopsis thaliana (Mouse-ear cress).